The primary structure comprises 199 residues: Charged multivesicular body protein 1b (199 aa).

Coiled-coil stretches lie at residues Leu-8–Lys-42 and Thr-178–Val-199. The disordered stretch occupies residues Glu-167–Val-199. The span at Gln-170–Thr-183 shows a compositional bias: polar residues. The short motif at Asp-186–Arg-196 is the MIT-interacting motif element.

Belongs to the SNF7 family. In terms of assembly, probable peripherally associated component of the endosomal sorting required for transport complex III (ESCRT-III).

The protein resides in the cytoplasm. It is found in the cytosol. It localises to the endosome. The protein localises to the late endosome membrane. In terms of biological role, probable peripherally associated component of the endosomal sorting required for transport complex III (ESCRT-III) which is involved in multivesicular bodies (MVBs) formation and sorting of endosomal cargo proteins into MVBs. MVBs contain intraluminal vesicles (ILVs) that are generated by invagination and scission from the limiting membrane of the endosome and mostly are delivered to lysosomes enabling degradation of membrane proteins, such as stimulated growth factor receptors, lysosomal enzymes and lipids. This chain is Charged multivesicular body protein 1b (chmp1b), found in Xenopus laevis (African clawed frog).